A 486-amino-acid polypeptide reads, in one-letter code: Na(+)/H(+) antiporter NhaA 2 (486 aa).

11 consecutive transmembrane segments (helical) span residues Gly58–Gly78, Leu102–Leu122, Ala138–Leu158, Ala168–Gly188, Val198–Leu218, His220–Ala240, Ile260–Val280, Leu300–Ser320, Val338–Val358, Leu374–Leu394, and Gly404–Leu424. The disordered stretch occupies residues Gly432–Arg486.

This sequence belongs to the NhaA Na(+)/H(+) (TC 2.A.33) antiporter family.

The protein resides in the cell membrane. It catalyses the reaction Na(+)(in) + 2 H(+)(out) = Na(+)(out) + 2 H(+)(in). Its function is as follows. Na(+)/H(+) antiporter that extrudes sodium in exchange for external protons. The polypeptide is Na(+)/H(+) antiporter NhaA 2 (Frankia alni (strain DSM 45986 / CECT 9034 / ACN14a)).